We begin with the raw amino-acid sequence, 300 residues long: Probable alpha-L-glutamate ligase (300 aa).

Residues 104–287 (LQLLARQGID…IAGRMIQWIE (184 aa)) form the ATP-grasp domain. Residues Lys141, 178–179 (EY), Asp187, and 211–213 (RSN) contribute to the ATP site. Asp248, Glu260, and Asn262 together coordinate Mg(2+). Positions 248, 260, and 262 each coordinate Mn(2+).

This sequence belongs to the RimK family. It depends on Mg(2+) as a cofactor. Requires Mn(2+) as cofactor.

The protein is Probable alpha-L-glutamate ligase of Citrobacter koseri (strain ATCC BAA-895 / CDC 4225-83 / SGSC4696).